The chain runs to 167 residues: Bacterial non-heme ferritin (167 aa).

One can recognise a Ferritin-like diiron domain in the interval 2–145; sequence LNKELLDALN…THIDYLNRIG (144 aa). 5 residues coordinate Fe cation: Glu17, Glu50, His53, Glu94, and Gln127.

It belongs to the ferritin family. Prokaryotic subfamily.

The protein resides in the cytoplasm. The catalysed reaction is 4 Fe(2+) + O2 + 6 H2O = 4 iron(III) oxide-hydroxide + 12 H(+). Iron-storage protein. This chain is Bacterial non-heme ferritin (ftnA), found in Staphylococcus saprophyticus subsp. saprophyticus (strain ATCC 15305 / DSM 20229 / NCIMB 8711 / NCTC 7292 / S-41).